A 486-amino-acid chain; its full sequence is GDP-Man:Man(3)GlcNAc(2)-PP-Dol alpha-1,2-mannosyltransferase (486 aa).

The Lumenal portion of the chain corresponds to 1 to 16 (MAGPMCLCGMMRLLTA). The helical transmembrane segment at 17–37 (LFIPVLITSVGLCLIFVLLFI) threads the bilayer. At 38 to 229 (CTRLWVQRKK…SNNPVLSRLK (192 aa)) the chain is on the cytoplasmic side. Positions 230–250 (LIYYYLFALFYGWVGSCSDVI) form an intramembrane region, helical. At 251–393 (MVNSTWTFSH…IGLHTMWNEH (143 aa)) the chain is on the cytoplasmic side. Residues 394–414 (FGIGIVECMAAGTIILAHNSG) constitute an intramembrane region (helical). The Cytoplasmic portion of the chain corresponds to 415-486 (GPKLDIVVPH…FLASSEPLFK (72 aa)).

The protein belongs to the glycosyltransferase group 1 family. Glycosyltransferase 4 subfamily.

The protein resides in the endoplasmic reticulum membrane. It catalyses the reaction an alpha-D-Man-(1-&gt;3)-[alpha-D-Man-(1-&gt;6)]-beta-D-Man-(1-&gt;4)-beta-D-GlcNAc-(1-&gt;4)-alpha-D-GlcNAc-diphospho-di-trans,poly-cis-dolichol + 2 GDP-alpha-D-mannose = an alpha-D-Man-(1-&gt;2)-alpha-D-Man-(1-&gt;2)-alpha-D-Man-(1-&gt;3)-[alpha-D-Man-(1-&gt;6)]-beta-D-Man-(1-&gt;4)-beta-D-GlcNAc-(1-&gt;4)-alpha-D-GlcNAc-diphospho-di-trans,poly-cis-dolichol + 2 GDP + 2 H(+). It participates in protein modification; protein glycosylation. Its function is as follows. GDP-Man:Man(3)GlcNAc(2)-PP-Dol alpha-1,2-mannosyltransferase that operates in the biosynthetic pathway of dolichol-linked oligosaccharides, the glycan precursors employed in protein asparagine (N)-glycosylation. The assembly of dolichol-linked oligosaccharides begins on the cytosolic side of the endoplasmic reticulum membrane and finishes in its lumen. The sequential addition of sugars to dolichol pyrophosphate produces dolichol-linked oligosaccharides containing fourteen sugars, including two GlcNAcs, nine mannoses and three glucoses. Once assembled, the oligosaccharide is transferred from the lipid to nascent proteins by oligosaccharyltransferases. Catalyzes, on the cytoplasmic face of the endoplasmic reticulum, the addition of the fourth and fifth mannose residues to the dolichol-linked oligosaccharide chain, to produce Man(5)GlcNAc(2)-PP-dolichol core oligosaccharide. Man(5)GlcNAc(2)-PP-dolichol is a substrate for ALG3, the following enzyme in the biosynthetic pathway. This chain is GDP-Man:Man(3)GlcNAc(2)-PP-Dol alpha-1,2-mannosyltransferase (alg11), found in Xenopus laevis (African clawed frog).